The chain runs to 236 residues: 2-C-methyl-D-erythritol 4-phosphate cytidylyltransferase (236 aa).

This sequence belongs to the IspD/TarI cytidylyltransferase family. IspD subfamily. As to quaternary structure, homodimer.

It catalyses the reaction 2-C-methyl-D-erythritol 4-phosphate + CTP + H(+) = 4-CDP-2-C-methyl-D-erythritol + diphosphate. The protein operates within isoprenoid biosynthesis; isopentenyl diphosphate biosynthesis via DXP pathway; isopentenyl diphosphate from 1-deoxy-D-xylulose 5-phosphate: step 2/6. Catalyzes the formation of 4-diphosphocytidyl-2-C-methyl-D-erythritol from CTP and 2-C-methyl-D-erythritol 4-phosphate (MEP). The sequence is that of 2-C-methyl-D-erythritol 4-phosphate cytidylyltransferase from Salmonella agona (strain SL483).